The chain runs to 249 residues: Histone H1 (249 aa).

2 stretches are compositionally biased toward low complexity: residues 1–19 (MSDS…QTAS) and 27–43 (KKPA…TTAP). Disordered regions lie at residues 1–53 (MSDS…QQMV) and 105–249 (QTKG…ATKK). In terms of domain architecture, H15 spans 45–119 (THPPTQQMVD…GASGSFKLSA (75 aa)). Basic and acidic residues predominate over residues 121-134 (SKKEPKPKVSSVEK). The span at 146-158 (AKKKTISATKKPK) shows a compositional bias: basic residues. Positions 173–190 (KSVDKKKAEKAKAKDAKK) are enriched in basic and acidic residues. Residues 195–233 (KAKPTTAKAKSSAAKPKTPKPKTTSAKPKKVVAAASPKK) are compositionally biased toward low complexity. The segment covering 234 to 249 (AAAKKPKAKTASATKK) has biased composition (basic residues).

The protein belongs to the histone H1/H5 family.

The protein localises to the nucleus. Its subcellular location is the chromosome. Histones H1 are necessary for the condensation of nucleosome chains into higher-order structures. The chain is Histone H1 (His1) from Drosophila hydei (Fruit fly).